Here is a 608-residue protein sequence, read N- to C-terminus: RAS guanyl-releasing protein 2 (608 aa).

An N-terminal Ras-GEF domain is found at 4–126 (TLDLDKGCTV…SLIDIESVPT (123 aa)). A phosphoserine mark is found at serine 116, serine 117, and serine 147. The Ras-GEF domain occupies 154 to 387 (EPMELAEHLT…YQLSLQREPR (234 aa)). The tract at residues 382 to 405 (LQREPRSKSSPTSPTSCTPPPRPP) is disordered. 2 EF-hand domains span residues 426–461 (HIEKMVESVFRNFDVDGDGHISQEEFQIIRGNFPYL) and 463–490 (AFGDLDQNQDGCISREEMISYFLRSSSV). Positions 439, 441, 443, 445, 450, 468, 470, 472, 474, and 479 each coordinate Ca(2+). The segment at 498–548 (VHNFQESNSLRPVACRHCKALILGIYKQGLKCRACGVNCHKQCKERLSVEC) adopts a Phorbol-ester/DAG-type zinc-finger fold. Phosphoserine occurs at positions 554 and 575. The tract at residues 555-596 (VSLEGSAPSPSPTHTHHRAFSFSLPRPGRRSSRPPEIREEEV) is disordered.

Belongs to the RASGRP family. In terms of assembly, forms a signaling complex with RAP1 and BRAF. Interacts with F-actin. Interacts with RAP1. Detected in megakaryocytes, platelet and neutrophils but not in lymphocytes (at protein level). Isoform 1 and isoform 3 are detected in brain basal glanglia, heart, lung, spleen, liver and kidney interstitial cells.

The protein resides in the cytoplasm. The protein localises to the cytosol. It is found in the cell membrane. Its subcellular location is the synapse. It localises to the synaptosome. The protein resides in the cell projection. The protein localises to the ruffle membrane. Functionally, functions as a calcium- and DAG-regulated nucleotide exchange factor specifically activating Rap through the exchange of bound GDP for GTP. May also activate other GTPases such as RRAS, RRAS2, NRAS, KRAS but not HRAS. Functions in aggregation of platelets and adhesion of T-lymphocytes and neutrophils probably through inside-out integrin activation. May function in the muscarinic acetylcholine receptor M1/CHRM1 signaling pathway. This chain is RAS guanyl-releasing protein 2 (Rasgrp2), found in Mus musculus (Mouse).